Reading from the N-terminus, the 151-residue chain is Protein SprT-like (151 aa).

In terms of domain architecture, SprT-like spans 6 to 147; sequence LQRMVENLSE…GHCNGKLRMK (142 aa). His67 contributes to the Zn(2+) binding site. Residue Glu68 is part of the active site. A Zn(2+)-binding site is contributed by His71.

Belongs to the SprT family. Zn(2+) serves as cofactor.

It is found in the cytoplasm. This chain is Protein SprT-like, found in Staphylococcus aureus (strain MRSA252).